The following is a 473-amino-acid chain: Cucurbitadienol 11-hydroxylase (473 aa).

A helical transmembrane segment spans residues 4–24 (VVLGLATLFVAYYIHWINKWR). Cysteine 422 contacts heme.

It belongs to the cytochrome P450 family. Heme is required as a cofactor. Highly expressed in young fruits 15 days after anthesis (15-DAA). Also observed in roots.

The protein localises to the membrane. It carries out the reaction cucurbitadienol + 2 reduced [NADPH--hemoprotein reductase] + 2 O2 = 11-oxocucurbitadienol + 2 oxidized [NADPH--hemoprotein reductase] + 3 H2O + 2 H(+). It catalyses the reaction cucurbitadienol + reduced [NADPH--hemoprotein reductase] + O2 = 11-hydroxycucurbitadienol + oxidized [NADPH--hemoprotein reductase] + H2O + H(+). The enzyme catalyses 11-hydroxycucurbitadienol + reduced [NADPH--hemoprotein reductase] + O2 = 11-oxocucurbitadienol + oxidized [NADPH--hemoprotein reductase] + 2 H2O + H(+). The catalysed reaction is (24R)-24,25-dihydroxycucurbitadienol + reduced [NADPH--hemoprotein reductase] + O2 = mogrol + oxidized [NADPH--hemoprotein reductase] + H2O + H(+). Its pathway is secondary metabolite biosynthesis; terpenoid biosynthesis. Hydroxylase involved in the biosynthesis of cucurbitacin and mogroside tetracyclic triterpene natural products (e.g. siamenoside I and mogrosides IV, V and VI). Cucurbitacins have cytotoxic properties and exhibit deterrent taste as a defense barrier against herbivores. Mogrosides are nonsugar highly oxygenated compounds used as high-intensity zero-calorie sweeteners; they also possess pharmacological properties such as regulating immunity, lowering blood sugar and lipid levels, protecting the liver, and acting as antioxidants and antitumor agents. Catalyzes the oxidation of cucurbitadienol at the C-11 position to produce 11-oxocucurbitadienol, a possible biosynthetic intermediate from cucurbitadienol to mogrol. Also mediates the conversion of 24,25-dihydroxycucurbitadienol to mogrol. This is Cucurbitadienol 11-hydroxylase from Siraitia grosvenorii (Monk's fruit).